The chain runs to 321 residues: Gap junction delta-2 protein (321 aa).

Residues 1–19 (MGEWTILERLLEAAVQQHS) lie on the Cytoplasmic side of the membrane. Residues 20-42 (TMIGRILLTVVVIFRILIVAIVG) traverse the membrane as a helical segment. At 43–75 (ETVYDDEQTMFVCNTLQPGCNQACYDRAFPISH) the chain is on the extracellular side. Residues 76–98 (IRYWVFQIIMVCTPSLCFITYSV) form a helical membrane-spanning segment. Topologically, residues 99-197 (HQSAKQRERR…KLRRQEGISR (99 aa)) are cytoplasmic. Residues 120-141 (PAESIGGPGGTGGGGSGGSKRE) form a disordered region. Over residues 125–137 (GGPGGTGGGGSGG) the composition is skewed to gly residues. A helical membrane pass occupies residues 198–220 (FYIIQVVFRNALEIGFLVGQYFL). Residues 221-252 (YGFSVPGLYECNRYPCIKEVECYVSRPTEKTV) lie on the Extracellular side of the membrane. The chain crosses the membrane as a helical span at residues 253–275 (FLVFMFAVSGICVVLNLAELNHL). The Cytoplasmic segment spans residues 276-321 (GWRKIKLAVRGAQAKRKSVYEIRNKDLPRVSVPNFGRTQSSDSAYV).

This sequence belongs to the connexin family. Delta-type subfamily. In terms of assembly, a connexon is composed of a hexamer of connexins. As to expression, highly expressed in neurons.

The protein resides in the cell membrane. It localises to the cell junction. Its subcellular location is the gap junction. One gap junction consists of a cluster of closely packed pairs of transmembrane channels, the connexons, through which materials of low MW diffuse from one cell to a neighboring cell. The chain is Gap junction delta-2 protein (Gjd2) from Rattus norvegicus (Rat).